The chain runs to 64 residues: Large ribosomal subunit protein bL35 (64 aa).

Residues 1-14 (MKQKTHKGAAKRIK) show a composition bias toward basic residues. The segment at 1 to 50 (MKQKTHKGAAKRIKISGSGKLRREQANRRHLLEGKPSKRTRRLKGTEDVA) is disordered. A compositionally biased stretch (basic and acidic residues) spans 21–36 (LRREQANRRHLLEGKP).

This sequence belongs to the bacterial ribosomal protein bL35 family.

The protein is Large ribosomal subunit protein bL35 of Corynebacterium jeikeium (strain K411).